The sequence spans 427 residues: UDP-N-acetylglucosamine 1-carboxyvinyltransferase (427 aa).

Residue 22–23 (KN) coordinates phosphoenolpyruvate. Arg-92 lines the UDP-N-acetyl-alpha-D-glucosamine pocket. Asp-116 functions as the Proton donor in the catalytic mechanism. Residues Asp-312 and Met-334 each coordinate UDP-N-acetyl-alpha-D-glucosamine.

The protein belongs to the EPSP synthase family. MurA subfamily.

Its subcellular location is the cytoplasm. The enzyme catalyses phosphoenolpyruvate + UDP-N-acetyl-alpha-D-glucosamine = UDP-N-acetyl-3-O-(1-carboxyvinyl)-alpha-D-glucosamine + phosphate. It functions in the pathway cell wall biogenesis; peptidoglycan biosynthesis. Its function is as follows. Cell wall formation. Adds enolpyruvyl to UDP-N-acetylglucosamine. The polypeptide is UDP-N-acetylglucosamine 1-carboxyvinyltransferase (Borrelia garinii subsp. bavariensis (strain ATCC BAA-2496 / DSM 23469 / PBi) (Borreliella bavariensis)).